We begin with the raw amino-acid sequence, 166 residues long: Thiamine precursor transporter HmpT (166 aa).

The next 5 helical transmembrane spans lie at 14–34, 35–55, 62–82, 105–125, and 126–146; these read LLAI…FPIP, GSAG…VFLF, IIGG…NYMF, FLLS…LMYG, and WGSA…GFVL.

In terms of assembly, in E.coli forms a stable energy-coupling factor (ECF) transporter complex composed of 2 membrane-embedded substrate-binding protein (S component), 2 ATP-binding proteins (A and A' components) and 2 transmembrane proteins (T component), probably with a stoichiometry of 2:1:1:2. May be able to interact with more than 1 S component at a time.

It localises to the cell membrane. Functionally, probably a thiamine precursor-binding protein that interacts with the energy-coupling factor (ECF) ABC-transporter complex. Unlike classic ABC transporters this ECF transporter provides the energy necessary to transport a number of different substrates. The substrates themselves are bound by transmembrane, not extracytoplasmic soluble proteins. The polypeptide is Thiamine precursor transporter HmpT (hmpT) (Lactococcus lactis subsp. cremoris (strain MG1363)).